The primary structure comprises 131 residues: Global transcriptional regulator Spx (131 aa).

Cysteines 10 and 13 form a disulfide.

Belongs to the ArsC family. Spx subfamily. As to quaternary structure, interacts with the C-terminal domain of the alpha subunit of the RNAP.

Its subcellular location is the cytoplasm. Global transcriptional regulator that plays a key role in stress response and exerts either positive or negative regulation of genes. Acts by interacting with the C-terminal domain of the alpha subunit of the RNA polymerase (RNAP). This interaction can enhance binding of RNAP to the promoter region of target genes and stimulate their transcription, or block interaction of RNAP with activator. This chain is Global transcriptional regulator Spx, found in Staphylococcus saprophyticus subsp. saprophyticus (strain ATCC 15305 / DSM 20229 / NCIMB 8711 / NCTC 7292 / S-41).